The chain runs to 139 residues: Large ribosomal subunit protein bL20 (139 aa).

Belongs to the bacterial ribosomal protein bL20 family.

Functionally, binds directly to 23S ribosomal RNA and is necessary for the in vitro assembly process of the 50S ribosomal subunit. It is not involved in the protein synthesizing functions of that subunit. The polypeptide is Large ribosomal subunit protein bL20 (Leuconostoc mesenteroides subsp. mesenteroides (strain ATCC 8293 / DSM 20343 / BCRC 11652 / CCM 1803 / JCM 6124 / NCDO 523 / NBRC 100496 / NCIMB 8023 / NCTC 12954 / NRRL B-1118 / 37Y)).